The following is a 289-amino-acid chain: Pantothenate synthetase (289 aa).

Residue 28–35 (MGCLHEGH) participates in ATP binding. Catalysis depends on H35, which acts as the Proton donor. Q59 contributes to the (R)-pantoate binding site. Q59 contacts beta-alanine. 147-150 (GLKD) is an ATP binding site. Q153 lines the (R)-pantoate pocket. Residues V176 and 184 to 187 (MSSR) each bind ATP.

It belongs to the pantothenate synthetase family. Homodimer.

It localises to the cytoplasm. It catalyses the reaction (R)-pantoate + beta-alanine + ATP = (R)-pantothenate + AMP + diphosphate + H(+). It participates in cofactor biosynthesis; (R)-pantothenate biosynthesis; (R)-pantothenate from (R)-pantoate and beta-alanine: step 1/1. Functionally, catalyzes the condensation of pantoate with beta-alanine in an ATP-dependent reaction via a pantoyl-adenylate intermediate. This Magnetococcus marinus (strain ATCC BAA-1437 / JCM 17883 / MC-1) protein is Pantothenate synthetase.